The chain runs to 95 residues: Large ribosomal subunit protein bL27 (95 aa).

A propeptide spanning residues 1 to 9 (MLKMNLQFF) is cleaved from the precursor.

It belongs to the bacterial ribosomal protein bL27 family. Post-translationally, the N-terminus is cleaved by ribosomal processing cysteine protease Prp.

The chain is Large ribosomal subunit protein bL27 from Lachnoclostridium phytofermentans (strain ATCC 700394 / DSM 18823 / ISDg) (Clostridium phytofermentans).